A 331-amino-acid chain; its full sequence is Tagatose 1,6-diphosphate aldolase 2 (331 aa).

The protein belongs to the aldolase LacD family.

It catalyses the reaction D-tagatofuranose 1,6-bisphosphate = D-glyceraldehyde 3-phosphate + dihydroxyacetone phosphate. The protein operates within carbohydrate metabolism; D-tagatose 6-phosphate degradation; D-glyceraldehyde 3-phosphate and glycerone phosphate from D-tagatose 6-phosphate: step 2/2. This is Tagatose 1,6-diphosphate aldolase 2 (lacD2) from Enterococcus faecalis (strain ATCC 700802 / V583).